The primary structure comprises 150 residues: MDTLDEEQLSALKKAFDSFDTDSKGFITPETVGVILRMMGVKISEKNLQQVIAETDEDGSGELEFEEFVELAAKFLIEEDEEALKAELKEAFRIYDKGGDGYITTDVLREILRELDNRLTEDDLDGIIEEVDEDGSGTLDFDEFMEMMSG.

Methionine 1 is subject to N-acetylmethionine. 4 consecutive EF-hand domains span residues 7–42, 43–78, 83–118, and 119–150; these read EQLS…MGVK, ISEK…FLIE, ALKA…LDNR, and LTED…MMSG. Aspartate 56, aspartate 58, serine 60, glutamate 62, and glutamate 67 together coordinate Ca(2+). Aspartate 132, aspartate 134, serine 136, threonine 138, and glutamate 143 together coordinate Ca(2+).

The protein belongs to the troponin C family.

Functionally, troponin is the central regulatory protein of striated muscle contraction. Tn consists of three components: Tn-I which is the inhibitor of actomyosin ATPase, Tn-T which contains the binding site for tropomyosin and Tn-C. The binding of calcium to Tn-C abolishes the inhibitory action of Tn on actin filaments. This Astacus leptodactylus (Turkish narrow-clawed crayfish) protein is Troponin C, isotype gamma.